The sequence spans 212 residues: 2-dehydro-3-deoxy-phosphogluconate aldolase (212 aa).

Glu-45 acts as the Proton acceptor in catalysis. The pyruvate site is built by Arg-49, Thr-73, and Lys-133. Lys-133 functions as the Schiff-base intermediate with substrate in the catalytic mechanism.

It belongs to the KHG/KDPG aldolase family. Homotrimer.

The protein localises to the cytoplasm. The enzyme catalyses 2-dehydro-3-deoxy-6-phospho-D-gluconate = D-glyceraldehyde 3-phosphate + pyruvate. It participates in carbohydrate acid metabolism; 2-dehydro-3-deoxy-D-gluconate degradation; D-glyceraldehyde 3-phosphate and pyruvate from 2-dehydro-3-deoxy-D-gluconate: step 2/2. Involved in the degradation of glucose via the Entner-Doudoroff pathway. Catalyzes the reversible, stereospecific retro-aldol cleavage of 2-keto-3-deoxy-6-phosphogluconate (KDPG) to pyruvate and D-glyceraldehyde-3-phosphate. The chain is 2-dehydro-3-deoxy-phosphogluconate aldolase (eda) from Haemophilus influenzae (strain ATCC 51907 / DSM 11121 / KW20 / Rd).